Consider the following 182-residue polypeptide: UPF0397 protein BT9727_2423 (182 aa).

5 helical membrane-spanning segments follow: residues 9–29, 40–60, 71–91, 114–134, and 142–162; these read VVAI…GFSI, AILT…IGLI, WGIW…MGFI, ITGL…DIIV, and IVIQ…VLGL.

It belongs to the UPF0397 family.

The protein localises to the cell membrane. The protein is UPF0397 protein BT9727_2423 of Bacillus thuringiensis subsp. konkukian (strain 97-27).